Here is a 99-residue protein sequence, read N- to C-terminus: Carboxysome shell vertex protein CcmL (99 aa).

Positions 1–83 constitute a BMV domain; it reads MKIARVCGTV…IDAAVVAIID (83 aa).

The protein belongs to the CcmL/EutN family. CcmL subfamily. As to quaternary structure, homopentamer. May interact with CcmK2, this occurs at very high CcmK2 concentrations. Interacts with full-length CcmM.

It is found in the carboxysome. In terms of biological role, probably forms vertices in the carboxysome, a polyhedral inclusion where RuBisCO (ribulose bisphosphate carboxylase, rbcL-rbcS) is sequestered. Has been modeled to induce curvature upon insertion into an otherwise flat hexagonal molecular layer of CcmK subunits. In Thermosynechococcus vestitus (strain NIES-2133 / IAM M-273 / BP-1), this protein is Carboxysome shell vertex protein CcmL.